We begin with the raw amino-acid sequence, 420 residues long: ATP phosphoribosyltransferase regulatory subunit (420 aa).

The protein belongs to the class-II aminoacyl-tRNA synthetase family. HisZ subfamily. In terms of assembly, heteromultimer composed of HisG and HisZ subunits.

Its subcellular location is the cytoplasm. Its pathway is amino-acid biosynthesis; L-histidine biosynthesis; L-histidine from 5-phospho-alpha-D-ribose 1-diphosphate: step 1/9. Required for the first step of histidine biosynthesis. May allow the feedback regulation of ATP phosphoribosyltransferase activity by histidine. This Bacillus mycoides (strain KBAB4) (Bacillus weihenstephanensis) protein is ATP phosphoribosyltransferase regulatory subunit.